The primary structure comprises 215 residues: 3-isopropylmalate dehydratase small subunit (215 aa).

The protein belongs to the LeuD family. LeuD type 1 subfamily. As to quaternary structure, heterodimer of LeuC and LeuD.

The catalysed reaction is (2R,3S)-3-isopropylmalate = (2S)-2-isopropylmalate. It functions in the pathway amino-acid biosynthesis; L-leucine biosynthesis; L-leucine from 3-methyl-2-oxobutanoate: step 2/4. In terms of biological role, catalyzes the isomerization between 2-isopropylmalate and 3-isopropylmalate, via the formation of 2-isopropylmaleate. The chain is 3-isopropylmalate dehydratase small subunit from Saccharophagus degradans (strain 2-40 / ATCC 43961 / DSM 17024).